We begin with the raw amino-acid sequence, 160 residues long: Protein-export protein SecB (160 aa).

It belongs to the SecB family. As to quaternary structure, homotetramer, a dimer of dimers. One homotetramer interacts with 1 SecA dimer.

The protein localises to the cytoplasm. One of the proteins required for the normal export of preproteins out of the cell cytoplasm. It is a molecular chaperone that binds to a subset of precursor proteins, maintaining them in a translocation-competent state. It also specifically binds to its receptor SecA. The chain is Protein-export protein SecB from Azorhizobium caulinodans (strain ATCC 43989 / DSM 5975 / JCM 20966 / LMG 6465 / NBRC 14845 / NCIMB 13405 / ORS 571).